We begin with the raw amino-acid sequence, 202 residues long: Large ribosomal subunit protein uL4 (202 aa).

Residues 47-67 (KTKAEVSGGGVKPWKQKGTGR) form a disordered region.

Belongs to the universal ribosomal protein uL4 family. In terms of assembly, part of the 50S ribosomal subunit.

In terms of biological role, one of the primary rRNA binding proteins, this protein initially binds near the 5'-end of the 23S rRNA. It is important during the early stages of 50S assembly. It makes multiple contacts with different domains of the 23S rRNA in the assembled 50S subunit and ribosome. Forms part of the polypeptide exit tunnel. This is Large ribosomal subunit protein uL4 from Dichelobacter nodosus (strain VCS1703A).